A 383-amino-acid polypeptide reads, in one-letter code: Odorant receptor 94b (383 aa).

Topologically, residues 1–41 (MESTNRLSAIQTLLVIQRWIGLLKWENEGEDGVLTWLKRIY) are cytoplasmic. Residues 42–62 (PFVLHLPLTFTYIALMWYEAI) form a helical membrane-spanning segment. At 63-70 (TSSDFEEA) the chain is on the extracellular side. A helical membrane pass occupies residues 71 to 91 (GQVLYMSITELALVTKLLNIW). The Cytoplasmic portion of the chain corresponds to 92–130 (YRRHEAASLIHELQHDPAFNLRNSEEIKFWQQNQRNFKR). Residues 131 to 151 (IFYWYIWGSLFVAVMGYISVF) form a helical membrane-spanning segment. The Extracellular segment spans residues 152-174 (FQEDYELPFGYYVPFEWRTRERY). The helical transmembrane segment at 175–195 (FYAWGYNVVAMTLCCLSNILL) threads the bilayer. The Cytoplasmic segment spans residues 196-250 (DTLGCYFMFHIASLFRLLGMRLEALKNAAEEKARPELRRIFQLHTKVRRLTRECE). A helical transmembrane segment spans residues 251–271 (VLVSPYVLSQVVFSAFIICFS). At 272 to 284 (AYRLVHMGFKQRP) the chain is on the extracellular side. The helical transmembrane segment at 285–305 (GLFVTTVQFVAVMIVQIFLPC) threads the bilayer. Residues 306-358 (YYGNELTFHANALTNSVFGTNWLEYSVGTRKLLNCYMEFLKRPVKVRAGVFFE) lie on the Cytoplasmic side of the membrane. A helical transmembrane segment spans residues 359–379 (IGLPIFVKTINNAYSFFALLL). Residues 380-383 (KISK) are Extracellular-facing.

It belongs to the insect chemoreceptor superfamily. Heteromeric odorant receptor channel (TC 1.A.69) family. Or2a subfamily. Interacts with Orco. Complexes exist early in the endomembrane system in olfactory sensory neurons (OSNs), coupling these complexes to the conserved ciliary trafficking pathway.

The protein localises to the cell membrane. Odorant receptor which mediates acceptance or avoidance behavior, depending on its substrates. The odorant receptor repertoire encodes a large collection of odor stimuli that vary widely in identity, intensity, and duration. May form a complex with Orco to form odorant-sensing units, providing sensitive and prolonged odorant signaling and calcium permeability. In Drosophila melanogaster (Fruit fly), this protein is Odorant receptor 94b (Or94b).